We begin with the raw amino-acid sequence, 254 residues long: Homeobox protein Dlx4b (254 aa).

Residues 129 to 188 (IRKPRTIYSSVQLQALHQRFQQTQYLALPERADLAAKLGLTQTQVKIWFQNKRSKYKKIM) constitute a DNA-binding region (homeobox).

The protein belongs to the distal-less homeobox family.

The protein resides in the nucleus. In terms of biological role, during larvae development, may be important for neurocranium morphogenesis. The chain is Homeobox protein Dlx4b (dlx4b) from Danio rerio (Zebrafish).